Reading from the N-terminus, the 380-residue chain is 4-hydroxy-tetrahydrodipicolinate synthase, chloroplastic (380 aa).

The disordered stretch occupies residues 1–44 (MISPTNLLPARKITPVSNGGAATASPSSPSVAARPRRLPSGLQS). The N-terminal 54 residues, 1-54 (MISPTNLLPARKITPVSNGGAATASPSSPSVAARPRRLPSGLQSVTGRGKVSLA), are a transit peptide targeting the chloroplast. A compositionally biased stretch (low complexity) spans 21 to 33 (AATASPSSPSVAA). Residue Thr123 coordinates pyruvate. Tyr209 acts as the Proton donor/acceptor in catalysis. Residue Lys237 is the Schiff-base intermediate with substrate of the active site. Ile276 is a binding site for pyruvate.

The protein belongs to the DapA family. Tetramer of modified subunits derived from two genes in different combinations.

The protein localises to the plastid. The protein resides in the chloroplast. The enzyme catalyses L-aspartate 4-semialdehyde + pyruvate = (2S,4S)-4-hydroxy-2,3,4,5-tetrahydrodipicolinate + H2O + H(+). The protein operates within amino-acid biosynthesis; L-lysine biosynthesis via DAP pathway; (S)-tetrahydrodipicolinate from L-aspartate: step 3/4. Sensitive to lysine inhibition. This inhibition increase in an allosteric manner with increasing concentration of the inhibitor. Catalyzes the condensation of (S)-aspartate-beta-semialdehyde [(S)-ASA] and pyruvate to 4-hydroxy-tetrahydrodipicolinate (HTPA). This is 4-hydroxy-tetrahydrodipicolinate synthase, chloroplastic from Zea mays (Maize).